Consider the following 419-residue polypeptide: Gamma-glutamyl phosphate reductase (419 aa).

It belongs to the gamma-glutamyl phosphate reductase family.

It is found in the cytoplasm. The enzyme catalyses L-glutamate 5-semialdehyde + phosphate + NADP(+) = L-glutamyl 5-phosphate + NADPH + H(+). It functions in the pathway amino-acid biosynthesis; L-proline biosynthesis; L-glutamate 5-semialdehyde from L-glutamate: step 2/2. In terms of biological role, catalyzes the NADPH-dependent reduction of L-glutamate 5-phosphate into L-glutamate 5-semialdehyde and phosphate. The product spontaneously undergoes cyclization to form 1-pyrroline-5-carboxylate. The sequence is that of Gamma-glutamyl phosphate reductase from Caldicellulosiruptor bescii (strain ATCC BAA-1888 / DSM 6725 / KCTC 15123 / Z-1320) (Anaerocellum thermophilum).